We begin with the raw amino-acid sequence, 220 residues long: Transmembrane emp24 domain-containing protein 1 (220 aa).

An N-terminal signal peptide occupies residues 1–19; the sequence is MAWSSSFLFIVLPLAAAVA. Residues 20 to 187 are Extracellular-facing; that stretch reads VQPQDTELTF…LQDSNLERVN (168 aa). The 83-residue stretch at 36–118 folds into the GOLD domain; that stretch reads QECFYQTTLY…EKLVFFELIF (83 aa). A coiled-coil region spans residues 138–164; it reads ELLDIKLEDIKESIESVKSRLERSIQM. The chain crosses the membrane as a helical span at residues 188–208; the sequence is FWSAINVGVLVTVAFLQVYML. The Cytoplasmic portion of the chain corresponds to 209-220; it reads KSLFDDKRKIRT. The COPII vesicle coat-binding signature appears at 211-212; that stretch reads LF. Positions 211–220 match the COPI vesicle coat-binding motif; sequence LFDDKRKIRT.

This sequence belongs to the EMP24/GP25L family. As to quaternary structure, homodimer in endoplasmic reticulum, endoplasmic reticulum-Golgi intermediate compartment and cis-Golgi network. Interacts with IL1RL1. Interacts with RNF26; this interaction is important to modulate innate immune signaling through the cGAS-STING pathway.

The protein localises to the cell membrane. It localises to the endoplasmic reticulum membrane. It is found in the golgi apparatus. The protein resides in the cis-Golgi network membrane. Its subcellular location is the endoplasmic reticulum-Golgi intermediate compartment membrane. Its function is as follows. Potential role in vesicular protein trafficking, mainly in the early secretory pathway. May act as a cargo receptor at the lumenal side for incorporation of secretory cargo molecules into transport vesicles and may be involved in vesicle coat formation at the cytoplasmic side. Plays a positive role in IL-33-mediated IL-8 and IL-6 production by interacting with interleukin-33 receptor IL1RL1. Plays also a role in the modulation of innate immune signaling through the cGAS-STING pathway by interacting with RNF26. This Xenopus tropicalis (Western clawed frog) protein is Transmembrane emp24 domain-containing protein 1 (tmed1).